We begin with the raw amino-acid sequence, 697 residues long: Mediator of RNA polymerase II transcription subunit 16 (697 aa).

WD repeat units lie at residues 68–107 (GHQEVITCLEWDQSGSRLLSADADGRIKCWGMTDHLANSW), 199–241 (RCRV…VSEK), 264–308 (DKFP…LPLN), and 622–663 (NQGS…CLPV).

Belongs to the Mediator complex subunit 16 family. Component of the Mediator complex.

The protein resides in the nucleus. In terms of biological role, component of the Mediator complex, a coactivator involved in the regulated transcription of nearly all RNA polymerase II-dependent genes. Mediator functions as a bridge to convey information from gene-specific regulatory proteins to the basal RNA polymerase II transcription machinery. Mediator is recruited to promoters by direct interactions with regulatory proteins and serves as a scaffold for the assembly of a functional preinitiation complex with RNA polymerase II and the general transcription factors. This chain is Mediator of RNA polymerase II transcription subunit 16 (med16), found in Xenopus laevis (African clawed frog).